Here is a 510-residue protein sequence, read N- to C-terminus: Aromatic-L-amino-acid decarboxylase (510 aa).

Over residues 1 to 17 (MSHIPISNTIPPKQTDG) the composition is skewed to polar residues. The tract at residues 1–29 (MSHIPISNTIPPKQTDGNGKANISPDKLD) is disordered. T117 provides a ligand contact to substrate. Residues A183, S184, H227, D305, and N334 each contribute to the pyridoxal 5'-phosphate site. H227 serves as a coordination point for substrate. An N6-(pyridoxal phosphate)lysine modification is found at K337. The segment at 358–384 (NAFNVDPLYLKHDMQGSAPDYRHWQIP) is disordered.

This sequence belongs to the group II decarboxylase family. Homodimer. Pyridoxal 5'-phosphate serves as cofactor.

The catalysed reaction is L-dopa + H(+) = dopamine + CO2. It catalyses the reaction 5-hydroxy-L-tryptophan + H(+) = serotonin + CO2. Catalyzes the decarboxylation of L-3,4-dihydroxyphenylalanine (L-DOPA) to dopamine and L-5-hydroxytryptophan (5-HTP) to serotonin. Catalyzes the formation of serotonin more efficiently than dopamine. Displays no activity to tyrosine. Variation in the synthesis of bioamines may be a factor contributing to natural variation in life span. The polypeptide is Aromatic-L-amino-acid decarboxylase (Ddc) (Drosophila simulans (Fruit fly)).